The sequence spans 235 residues: Large ribosomal subunit protein uL4 (235 aa).

Positions 45–75 (RAGTASTKTRGEVSGGGRKPWPQKHTGRARH) are disordered. Basic residues predominate over residues 65-75 (WPQKHTGRARH).

Belongs to the universal ribosomal protein uL4 family. In terms of assembly, part of the 50S ribosomal subunit.

In terms of biological role, one of the primary rRNA binding proteins, this protein initially binds near the 5'-end of the 23S rRNA. It is important during the early stages of 50S assembly. It makes multiple contacts with different domains of the 23S rRNA in the assembled 50S subunit and ribosome. Forms part of the polypeptide exit tunnel. The polypeptide is Large ribosomal subunit protein uL4 (Thermotoga petrophila (strain ATCC BAA-488 / DSM 13995 / JCM 10881 / RKU-1)).